Reading from the N-terminus, the 96-residue chain is Aspartyl/glutamyl-tRNA(Asn/Gln) amidotransferase subunit C (96 aa).

Belongs to the GatC family. Heterotrimer of A, B and C subunits.

The enzyme catalyses L-glutamyl-tRNA(Gln) + L-glutamine + ATP + H2O = L-glutaminyl-tRNA(Gln) + L-glutamate + ADP + phosphate + H(+). The catalysed reaction is L-aspartyl-tRNA(Asn) + L-glutamine + ATP + H2O = L-asparaginyl-tRNA(Asn) + L-glutamate + ADP + phosphate + 2 H(+). In terms of biological role, allows the formation of correctly charged Asn-tRNA(Asn) or Gln-tRNA(Gln) through the transamidation of misacylated Asp-tRNA(Asn) or Glu-tRNA(Gln) in organisms which lack either or both of asparaginyl-tRNA or glutaminyl-tRNA synthetases. The reaction takes place in the presence of glutamine and ATP through an activated phospho-Asp-tRNA(Asn) or phospho-Glu-tRNA(Gln). The polypeptide is Aspartyl/glutamyl-tRNA(Asn/Gln) amidotransferase subunit C (Fusobacterium nucleatum subsp. nucleatum (strain ATCC 25586 / DSM 15643 / BCRC 10681 / CIP 101130 / JCM 8532 / KCTC 2640 / LMG 13131 / VPI 4355)).